A 426-amino-acid chain; its full sequence is MLDPTLLRQQLAKLAECLSTVRGFTLDVAALEALESERKRIQVHTQELQSLRNSKSKAIGQARSKGEDVSSLMAEVAAFSDDLKASEIALEEIRTELEKVALGIPNLPQQDVPLGADERDNVEQARWGVPRTFDFSIKDHVELGACHGWLDAESAAKLSGARFTVLRGPIARLHRALAQCMLDLHVRQHGYEEVNVPIIVNADSLYGTGQLPKFEEDMFSTQLGEHRRYLISTSEISLTNLVRNEIIEADRLPLRMAAHSLCFRSEAGSGGRDTRGMIRQHQFEKVELVSVCKPQESEGEHQRMTRCAETVLEMLGLPYRKILLCTGDMGFAATKTYDLEVWLPSQGMYREISSCSNCGDFQARRMQARWRNSVTGKPELVHTLNGSGVAVGRAMIAVMENYQNADGSITVPEVLRPYMDGLSRIG.

233 to 235 (TSE) is a binding site for L-serine. 264–266 (RSE) provides a ligand contact to ATP. Glutamate 287 is a binding site for L-serine. ATP is bound at residue 351–354 (EISS). Residue serine 387 participates in L-serine binding.

The protein belongs to the class-II aminoacyl-tRNA synthetase family. Type-1 seryl-tRNA synthetase subfamily. Homodimer. The tRNA molecule binds across the dimer.

The protein resides in the cytoplasm. The catalysed reaction is tRNA(Ser) + L-serine + ATP = L-seryl-tRNA(Ser) + AMP + diphosphate + H(+). It catalyses the reaction tRNA(Sec) + L-serine + ATP = L-seryl-tRNA(Sec) + AMP + diphosphate + H(+). Its pathway is aminoacyl-tRNA biosynthesis; selenocysteinyl-tRNA(Sec) biosynthesis; L-seryl-tRNA(Sec) from L-serine and tRNA(Sec): step 1/1. Its function is as follows. Catalyzes the attachment of serine to tRNA(Ser). Is also able to aminoacylate tRNA(Sec) with serine, to form the misacylated tRNA L-seryl-tRNA(Sec), which will be further converted into selenocysteinyl-tRNA(Sec). The chain is Serine--tRNA ligase from Xylella fastidiosa (strain 9a5c).